A 138-amino-acid polypeptide reads, in one-letter code: MRTLWIMAVLLLGVEGSLIELGKMIFQETGKNPVKNYGLYGCNCGVGNRGKPVDATDRCCFVHKCCYKKVTGCDPKKDRYSYSWENKAIVCGEKNPPCLKQVCECDKAVAICLRENLGTYDKKHRVTVKFLCKAPESC.

A signal peptide spans 1 to 16; it reads MRTLWIMAVLLLGVEG. 7 disulfides stabilise this stretch: cysteine 42/cysteine 132, cysteine 44/cysteine 60, cysteine 59/cysteine 112, cysteine 65/cysteine 138, cysteine 66/cysteine 105, cysteine 73/cysteine 98, and cysteine 91/cysteine 103. Positions 122–133 are important for membrane-damaging activities in eukaryotes and bacteria; heparin-binding; the sequence is KKHRVTVKFLCK.

This sequence belongs to the phospholipase A2 family. Group II subfamily. K49 sub-subfamily. In terms of assembly, homodimer; non-covalently linked. Expressed by the venom gland.

Its subcellular location is the secreted. Snake venom phospholipase A2 (PLA2) that lacks enzymatic activity. Displays myotoxic activities. A model of myotoxic mechanism has been proposed: an apo Lys49-PLA2 is activated by the entrance of a hydrophobic molecule (e.g. fatty acid) at the hydrophobic channel of the protein leading to a reorientation of a monomer. This reorientation causes a transition between 'inactive' to 'active' states, causing alignment of C-terminal and membrane-docking sites (MDoS) side-by-side and putting the membrane-disruption sites (MDiS) in the same plane, exposed to solvent and in a symmetric position for both monomers. The MDoS region stabilizes the toxin on membrane by the interaction of charged residues with phospholipid head groups. Subsequently, the MDiS region destabilizes the membrane with penetration of hydrophobic residues. This insertion causes a disorganization of the membrane, allowing an uncontrolled influx of ions (i.e. calcium and sodium), and eventually triggering irreversible intracellular alterations and cell death. The polypeptide is Basic phospholipase A2 homolog G6K49 (Calloselasma rhodostoma (Malayan pit viper)).